The sequence spans 359 residues: Endoglucanase 1 (359 aa).

2 disordered regions span residues 1–26 (MENP…RGGR) and 47–72 (TGAS…DAGT). Positions 13-24 (LRRRRSERRARG) are enriched in basic residues. Residues 60-72 (APSADSGTADAGT) are compositionally biased toward low complexity. Aspartate 154 is a catalytic residue. Cysteine 155 and cysteine 199 are joined by a disulfide. The active-site Proton donor is aspartate 192. The active-site Nucleophile is the aspartate 339.

Belongs to the glycosyl hydrolase 6 (cellulase B) family.

The enzyme catalyses Endohydrolysis of (1-&gt;4)-beta-D-glucosidic linkages in cellulose, lichenin and cereal beta-D-glucans.. Its function is as follows. CMCase I preferentially hydrolyzes carboxymethyl cellulose (CMC). This is Endoglucanase 1 (casA) from Streptomyces sp. (strain KSM-9).